The following is a 166-amino-acid chain: UBA-like domain-containing protein 2 (166 aa).

The tract at residues 120 to 166 (QQPVWLPPASPTTHLHHHHHHPQPVWPPNSQPTGGPQKAMAAMDGQR) is disordered.

Belongs to the UBALD family.

The sequence is that of UBA-like domain-containing protein 2 (ubald2) from Xenopus tropicalis (Western clawed frog).